A 474-amino-acid chain; its full sequence is HTH-type transcriptional regulator RamB (474 aa).

In terms of domain architecture, HTH cro/C1-type spans 10–64; sequence VRQLRNERGFSQAALAQMLEISPSYLNQIEHDVRPLTVAVLLRITEVFGVDATFF. The segment at residues 21–40 is a DNA-binding region (H-T-H motif); the sequence is QAALAQMLEISPSYLNQIEH.

Belongs to the short-chain fatty acyl-CoA assimilation regulator (ScfR) family.

In terms of biological role, involved in the control of the glyoxylate cycle. RamB negatively controls the expression of icl expression during growth on acetate as the sole carbon source. The polypeptide is HTH-type transcriptional regulator RamB (Mycobacterium tuberculosis (strain CDC 1551 / Oshkosh)).